The following is a 242-amino-acid chain: Small ribosomal subunit protein uS5 (242 aa).

Residues 1–14 (MADENSTGPGNQPE) are compositionally biased toward polar residues. The interval 1–65 (MADENSTGPG…DRRPRDEDGG (65 aa)) is disordered. Positions 41–65 (DGGRGGRDGGRGRRDDRRPRDEDGG) are enriched in basic and acidic residues. Positions 68 to 131 (LIEKLVHINR…AAAKKAMIRV (64 aa)) constitute an S5 DRBM domain. A disordered region spans residues 204–242 (EQTSPKSVAQRRGKKVSDLIKRGGASDRAAEAEAAAVTE). Residues 218-234 (KVSDLIKRGGASDRAAE) are compositionally biased toward basic and acidic residues.

The protein belongs to the universal ribosomal protein uS5 family. Part of the 30S ribosomal subunit. Contacts proteins S4 and S8.

Its function is as follows. With S4 and S12 plays an important role in translational accuracy. Functionally, located at the back of the 30S subunit body where it stabilizes the conformation of the head with respect to the body. This Sphingopyxis alaskensis (strain DSM 13593 / LMG 18877 / RB2256) (Sphingomonas alaskensis) protein is Small ribosomal subunit protein uS5.